Reading from the N-terminus, the 397-residue chain is Elongation factor Tu (397 aa).

In terms of domain architecture, tr-type G spans 10 to 206 (KPHVNIGTIG…AVDEAIPTPP (197 aa)). Residues 19 to 26 (GHIDHGKT) are G1. GTP is bound at residue 19-26 (GHIDHGKT). T26 is a Mg(2+) binding site. Positions 62–66 (GITIS) are G2. The segment at 83–86 (DCPG) is G3. GTP is bound by residues 83–87 (DCPGH) and 138–141 (NKAD). The G4 stretch occupies residues 138 to 141 (NKAD). The interval 176–178 (SAL) is G5.

The protein belongs to the TRAFAC class translation factor GTPase superfamily. Classic translation factor GTPase family. EF-Tu/EF-1A subfamily. In terms of assembly, monomer.

It is found in the cytoplasm. The catalysed reaction is GTP + H2O = GDP + phosphate + H(+). Functionally, GTP hydrolase that promotes the GTP-dependent binding of aminoacyl-tRNA to the A-site of ribosomes during protein biosynthesis. In Kitasatospora aureofaciens (Streptomyces aureofaciens), this protein is Elongation factor Tu.